The following is a 257-amino-acid chain: Phosphatidylglycerol--prolipoprotein diacylglyceryl transferase (257 aa).

4 helical membrane passes run 8–28, 48–68, 84–104, and 109–129; these read IFGL…ILAY, VFIV…VIFN, EGGL…YLMS, and LNFL…QAIG. R130 is a binding site for a 1,2-diacyl-sn-glycero-3-phospho-(1'-sn-glycerol). Helical transmembrane passes span 169–189, 196–216, and 225–245; these read PTFL…LLIT, GSIF…IEGL, and SLRM…ILII.

Belongs to the Lgt family.

The protein resides in the cell membrane. The enzyme catalyses L-cysteinyl-[prolipoprotein] + a 1,2-diacyl-sn-glycero-3-phospho-(1'-sn-glycerol) = an S-1,2-diacyl-sn-glyceryl-L-cysteinyl-[prolipoprotein] + sn-glycerol 1-phosphate + H(+). Its pathway is protein modification; lipoprotein biosynthesis (diacylglyceryl transfer). Catalyzes the transfer of the diacylglyceryl group from phosphatidylglycerol to the sulfhydryl group of the N-terminal cysteine of a prolipoprotein, the first step in the formation of mature lipoproteins. This is Phosphatidylglycerol--prolipoprotein diacylglyceryl transferase from Clostridium novyi (strain NT).